A 193-amino-acid polypeptide reads, in one-letter code: Peptide deformylase 2 (193 aa).

Fe cation contacts are provided by cysteine 100 and histidine 142. The active site involves glutamate 143. A Fe cation-binding site is contributed by histidine 146.

It belongs to the polypeptide deformylase family. The cofactor is Fe(2+).

The enzyme catalyses N-terminal N-formyl-L-methionyl-[peptide] + H2O = N-terminal L-methionyl-[peptide] + formate. In terms of biological role, removes the formyl group from the N-terminal Met of newly synthesized proteins. Requires at least a dipeptide for an efficient rate of reaction. N-terminal L-methionine is a prerequisite for activity but the enzyme has broad specificity at other positions. The sequence is that of Peptide deformylase 2 from Corynebacterium efficiens (strain DSM 44549 / YS-314 / AJ 12310 / JCM 11189 / NBRC 100395).